Reading from the N-terminus, the 428-residue chain is GTPase Obg (428 aa).

In terms of domain architecture, Obg spans 1–158 (MFVDKVKVYA…RNLLLELKVL (158 aa)). Positions 159–329 (ADVGLVGFPS…LMLAIADELE (171 aa)) constitute an OBG-type G domain. GTP contacts are provided by residues 165–172 (GFPSVGKS), 190–194 (FTTIT), 212–215 (DLPG), 282–285 (NKMD), and 310–312 (SAI). Mg(2+) is bound by residues Ser-172 and Thr-192. The 79-residue stretch at 350–428 (KHELPIEPFT…IMKFEFEFVE (79 aa)) folds into the OCT domain.

The protein belongs to the TRAFAC class OBG-HflX-like GTPase superfamily. OBG GTPase family. In terms of assembly, monomer. Mg(2+) serves as cofactor.

The protein localises to the cytoplasm. In terms of biological role, an essential GTPase which binds GTP, GDP and possibly (p)ppGpp with moderate affinity, with high nucleotide exchange rates and a fairly low GTP hydrolysis rate. Plays a role in control of the cell cycle, stress response, ribosome biogenesis and in those bacteria that undergo differentiation, in morphogenesis control. The polypeptide is GTPase Obg (Shouchella clausii (strain KSM-K16) (Alkalihalobacillus clausii)).